We begin with the raw amino-acid sequence, 30 residues long: Cycloviolacin-O9 (30 aa).

Positions glycine 1–asparagine 30 form a cross-link, cyclopeptide (Gly-Asn). 3 disulfide bridges follow: cysteine 4–cysteine 20, cysteine 8–cysteine 22, and cysteine 13–cysteine 27.

This is a cyclic peptide.

Its function is as follows. Probably participates in a plant defense mechanism. This chain is Cycloviolacin-O9, found in Viola odorata (Sweet violet).